The following is a 128-amino-acid chain: Disintegrin gabonin-1 (128 aa).

Residues 1–20 (MIQVLLVIICLAVFPYQGSS) form the signal peptide. Residues 21-47 (IILESGNVNDYEIVYPKKVTVLPTGAM) constitute a propeptide that is removed on maturation. The region spanning 47–112 (MNSAHPCCDP…DCPRNPNKGE (66 aa)) is the Disintegrin domain. 4 disulfides stabilise this stretch: cysteine 53–cysteine 76, cysteine 67–cysteine 73, cysteine 72–cysteine 97, and cysteine 85–cysteine 104. The short motif at 89-91 (RGD) is the Cell attachment site element. The interval 108 to 128 (PNKGESDELEWSAAATGSVLM) is disordered.

It belongs to the disintegrin family. Dimeric disintegrin subfamily. In terms of assembly, heterodimer with bitisgabonin (bitisgabonin-1 is the name of the heterodimer); disulfide-linked. Expressed by the venom gland.

It is found in the secreted. Functionally, the heterodimer bitisgabonin-1 is a potent inhibitor of the adhesion of the RGD-dependent integrin alpha-5/beta-1 (ITGA5/ITGB1) to immobilized fibronectin. This is Disintegrin gabonin-1 from Bitis gabonica (Gaboon adder).